Here is a 113-residue protein sequence, read N- to C-terminus: T cell receptor alpha variable 8-4 (113 aa).

A signal peptide spans 1–20; the sequence is MLLLLVPVLEVIFTLGGTRA. The Ig-like domain occupies 21–113; that stretch reads QSVTQLGSHV…DAAEYFCAVS (93 aa). An intrachain disulfide couples Cys-42 to Cys-110. A glycan (N-linked (GlcNAc...) asparagine) is linked at Asn-43.

As to quaternary structure, alpha-beta TR is a heterodimer composed of an alpha and beta chain; disulfide-linked. The alpha-beta TR is associated with the transmembrane signaling CD3 coreceptor proteins to form the TR-CD3 (TcR or TCR). The assembly of alpha-beta TR heterodimers with CD3 occurs in the endoplasmic reticulum where a single alpha-beta TR heterodimer associates with one CD3D-CD3E heterodimer, one CD3G-CD3E heterodimer and one CD247 homodimer forming a stable octameric structure. CD3D-CD3E and CD3G-CD3E heterodimers preferentially associate with TR alpha and TR beta chains, respectively. The association of the CD247 homodimer is the last step of TcR assembly in the endoplasmic reticulum and is required for transport to the cell surface.

It localises to the cell membrane. In terms of biological role, v region of the variable domain of T cell receptor (TR) alpha chain that participates in the antigen recognition. Alpha-beta T cell receptors are antigen specific receptors which are essential to the immune response and are present on the cell surface of T lymphocytes. Recognize peptide-major histocompatibility (MH) (pMH) complexes that are displayed by antigen presenting cells (APC), a prerequisite for efficient T cell adaptive immunity against pathogens. Binding of alpha-beta TR to pMH complex initiates TR-CD3 clustering on the cell surface and intracellular activation of LCK that phosphorylates the ITAM motifs of CD3G, CD3D, CD3E and CD247 enabling the recruitment of ZAP70. In turn ZAP70 phosphorylates LAT, which recruits numerous signaling molecules to form the LAT signalosome. The LAT signalosome propagates signal branching to three major signaling pathways, the calcium, the mitogen-activated protein kinase (MAPK) kinase and the nuclear factor-kappa-B (NF-kB) pathways, leading to the mobilization of transcription factors that are critical for gene expression and essential for T cell growth and differentiation. The T cell repertoire is generated in the thymus, by V-(D)-J rearrangement. This repertoire is then shaped by intrathymic selection events to generate a peripheral T cell pool of self-MH restricted, non-autoaggressive T cells. Post-thymic interaction of alpha-beta TR with the pMH complexes shapes TR structural and functional avidity. This is T cell receptor alpha variable 8-4 from Homo sapiens (Human).